We begin with the raw amino-acid sequence, 315 residues long: Polyprenyl transferase mpaA (315 aa).

8 helical membrane-spanning segments follow: residues 40–60 (IEFI…LCGA), 84–103 (LASG…GQYF), 118–135 (IWSL…YPYL), 143–163 (VFVY…ITGW), 174–194 (GDII…CVYF), 224–244 (LFLA…ISTI), 248–268 (WLWV…IAQF), and 279–299 (IHWD…VEVG).

Belongs to the UbiA prenyltransferase family. It depends on Mg(2+) as a cofactor.

Its subcellular location is the golgi apparatus membrane. The catalysed reaction is 5,7-dihydroxy-4-methylphthalide + (2E,6E)-farnesyl diphosphate = 4-farnesyl-3,5-dihydroxy-6-methylphthalide + diphosphate. It functions in the pathway secondary metabolite biosynthesis; terpenoid biosynthesis. Polyprenyl transferase; part of the gene cluster that mediates the biosynthesis of mycophenolic acid (MPA), the first isolated antibiotic natural product in the world obtained from a culture of Penicillium brevicompactum in 1893. MpaA is a Golgi apparatus-associated enzyme that catalyzes the prenylation of 5,7-dihydroxy-4,6-dimethylphthalide (DHMP) to yield farnesyl-DHMP (FDHMP). The first step of the pathway is the synthesis of 5-methylorsellinic acid (5MOA) by the cytosolic polyketide synthase mpaC. 5MOA is then converted to the phthalide compound 5,7-dihydroxy-4,6-dimethylphthalide (DHMP) by the endoplasmic reticulum-bound cytochrome P450 monooxygenase mpaDE. MpaDE first catalyzes hydroxylation of 5-MOA to 4,6-dihydroxy-2-(hydroxymethyl)-3-methylbenzoic acid (DHMB). MpaDE then acts as a lactone synthase that catalyzes the ring closure to convert DHMB into DHMP. The next step is the prenylation of DHMP by the Golgi apparatus-associated prenyltransferase mpaA to yield farnesyl-DHMP (FDHMP). The ER-bound oxygenase mpaB then mediates the oxidative cleavage the C19-C20 double bond in FDHMP to yield FDHMP-3C via a mycophenolic aldehyde intermediate. The O-methyltransferase mpaG catalyzes the methylation of FDHMP-3C to yield MFDHMP-3C. After the cytosolic methylation of FDHMP-3C, MFDHMP-3C enters into peroxisomes probably via free diffusion due to its low molecular weight. Upon a peroxisomal CoA ligation reaction, catalyzed by a beta-oxidation component enzyme acyl-CoA ligase ACL891, MFDHMP-3C-CoA would then be restricted to peroxisomes for the following beta-oxidation pathway steps. The peroxisomal beta-oxidation machinery than converts MFDHMP-3C-CoA into MPA_CoA, via a beta-oxidation chain-shortening process. Finally mpaH acts as a peroxisomal acyl-CoA hydrolase with high substrate specificity toward MPA-CoA to release the final product MPA. This chain is Polyprenyl transferase mpaA, found in Penicillium brevicompactum.